The chain runs to 289 residues: Diaminopimelate epimerase (289 aa).

Residues Asn-13, Gln-47, and Asn-67 each contribute to the substrate site. Cys-76 serves as the catalytic Proton donor. Substrate-binding positions include 77 to 78 (GN), Asn-167, Asn-200, and 218 to 219 (ER). The Proton acceptor role is filled by Cys-227. 228–229 (GT) is a substrate binding site.

The protein belongs to the diaminopimelate epimerase family. As to quaternary structure, homodimer.

The protein localises to the cytoplasm. The enzyme catalyses (2S,6S)-2,6-diaminopimelate = meso-2,6-diaminopimelate. Its pathway is amino-acid biosynthesis; L-lysine biosynthesis via DAP pathway; DL-2,6-diaminopimelate from LL-2,6-diaminopimelate: step 1/1. In terms of biological role, catalyzes the stereoinversion of LL-2,6-diaminopimelate (L,L-DAP) to meso-diaminopimelate (meso-DAP), a precursor of L-lysine and an essential component of the bacterial peptidoglycan. The protein is Diaminopimelate epimerase of Burkholderia mallei (strain NCTC 10247).